The following is a 327-amino-acid chain: ABC transporter periplasmic-binding protein YphF (327 aa).

The signal sequence occupies residues 1–26 (MPTKMRTTRNLLLMATLLGSALFARA).

The protein belongs to the bacterial solute-binding protein 2 family.

The protein localises to the periplasm. In terms of biological role, probably part of the binding-protein-dependent transport system YphDEF. The sequence is that of ABC transporter periplasmic-binding protein YphF (yphF) from Escherichia coli (strain K12).